Consider the following 599-residue polypeptide: Elongation factor 4 (599 aa).

In terms of domain architecture, tr-type G spans 5-187 (SHIRNFSIIA…HLVRVIPPPQ (183 aa)). Residues 17–22 (DHGKST) and 134–137 (NKMD) each bind GTP.

The protein belongs to the TRAFAC class translation factor GTPase superfamily. Classic translation factor GTPase family. LepA subfamily.

It is found in the cell inner membrane. It carries out the reaction GTP + H2O = GDP + phosphate + H(+). Functionally, required for accurate and efficient protein synthesis under certain stress conditions. May act as a fidelity factor of the translation reaction, by catalyzing a one-codon backward translocation of tRNAs on improperly translocated ribosomes. Back-translocation proceeds from a post-translocation (POST) complex to a pre-translocation (PRE) complex, thus giving elongation factor G a second chance to translocate the tRNAs correctly. Binds to ribosomes in a GTP-dependent manner. The chain is Elongation factor 4 from Azotobacter vinelandii (strain DJ / ATCC BAA-1303).